Here is a 357-residue protein sequence, read N- to C-terminus: Protein-glutamate methylesterase/protein-glutamine glutaminase 1 (357 aa).

The Response regulatory domain occupies 7 to 124 (KVLCVDDSAL…REGLLDYTQT (118 aa)). The residue at position 58 (D58) is a 4-aspartylphosphate. The CheB-type methylesterase domain maps to 158 to 350 (LLSTEKLIIV…QRVMAHLATF (193 aa)). Residues S170, H196, and D292 contribute to the active site.

Belongs to the CheB family. Post-translationally, phosphorylated by CheA. Phosphorylation of the N-terminal regulatory domain activates the methylesterase activity.

The protein localises to the cytoplasm. It carries out the reaction [protein]-L-glutamate 5-O-methyl ester + H2O = L-glutamyl-[protein] + methanol + H(+). The catalysed reaction is L-glutaminyl-[protein] + H2O = L-glutamyl-[protein] + NH4(+). Functionally, involved in chemotaxis. Part of a chemotaxis signal transduction system that modulates chemotaxis in response to various stimuli. Catalyzes the demethylation of specific methylglutamate residues introduced into the chemoreceptors (methyl-accepting chemotaxis proteins or MCP) by CheR. Also mediates the irreversible deamidation of specific glutamine residues to glutamic acid. The sequence is that of Protein-glutamate methylesterase/protein-glutamine glutaminase 1 from Cupriavidus metallidurans (strain ATCC 43123 / DSM 2839 / NBRC 102507 / CH34) (Ralstonia metallidurans).